A 364-amino-acid chain; its full sequence is Dihydroorotate dehydrogenase (quinone) (364 aa).

Residues 61 to 65 (AGYDK) and threonine 85 each bind FMN. A substrate-binding site is contributed by lysine 65. 110–114 (NRLGF) provides a ligand contact to substrate. Asparagine 139 and asparagine 170 together coordinate FMN. Asparagine 170 serves as a coordination point for substrate. The Nucleophile role is filled by serine 173. Asparagine 175 serves as a coordination point for substrate. Lysine 215 and serine 243 together coordinate FMN. Residue 244-245 (NT) coordinates substrate. FMN is bound by residues glycine 266, glycine 295, and 316–317 (YT).

It belongs to the dihydroorotate dehydrogenase family. Type 2 subfamily. In terms of assembly, monomer. It depends on FMN as a cofactor.

It localises to the cell membrane. The catalysed reaction is (S)-dihydroorotate + a quinone = orotate + a quinol. The protein operates within pyrimidine metabolism; UMP biosynthesis via de novo pathway; orotate from (S)-dihydroorotate (quinone route): step 1/1. In terms of biological role, catalyzes the conversion of dihydroorotate to orotate with quinone as electron acceptor. The protein is Dihydroorotate dehydrogenase (quinone) of Brucella abortus (strain S19).